Here is a 1463-residue protein sequence, read N- to C-terminus: DNA polymerase III PolC-type (1463 aa).

The region spanning 425–581 (YVVFDVETTG…YDAEATGRLL (157 aa)) is the Exonuclease domain.

This sequence belongs to the DNA polymerase type-C family. PolC subfamily.

It is found in the cytoplasm. It catalyses the reaction DNA(n) + a 2'-deoxyribonucleoside 5'-triphosphate = DNA(n+1) + diphosphate. Its function is as follows. Required for replicative DNA synthesis. This DNA polymerase also exhibits 3' to 5' exonuclease activity. The polypeptide is DNA polymerase III PolC-type (Streptococcus pneumoniae serotype 4 (strain ATCC BAA-334 / TIGR4)).